The sequence spans 338 residues: MNASQLVAIQVLLDNAAFAALMVATALYWLAAAFRRVPLLHELGTGASAVALLSVTGLLTARWIETDHFPVSNLYESLFFLCWCVLAVHIAAEAFARQRLVGVFTLPVALGMVAFSSLTLSPAMKAGGPLVPALKSNWLMMHVSVMILSYGALMVGSLVSIAFLIVTWKQKDPELRGSSVGTGGFQKAEYTDSESTPPAGSMLSSLGVGGSETTVTLTSATATAGTALRRSNLAETLDNLSYRLIGLGFPLITVGIIAGAVWANEAWGSYWSWDPKETWSLITWFIFAAYLHARITRGWQGRRPATLAAVGFVSVWITYLGVNFLAQGLHSYGWLSGN.

Helical transmembrane passes span 11-31 (VLLD…YWLA), 39-59 (LLHE…TGLL), 76-96 (ESLF…EAFA), 100-120 (LVGV…SLTL), 145-165 (VMIL…AFLI), 244-264 (LIGL…VWAN), 278-295 (TWSL…HARI), and 305-325 (ATLA…VNFL).

This sequence belongs to the CcmF/CycK/Ccl1/NrfE/CcsA family. As to quaternary structure, may interact with ccs1.

Its subcellular location is the cell inner membrane. Functionally, required during biogenesis of c-type cytochromes (cytochrome c6 and cytochrome f) at the step of heme attachment. The protein is Cytochrome c biogenesis protein CcsA of Gloeobacter violaceus (strain ATCC 29082 / PCC 7421).